The following is a 203-amino-acid chain: Protein shisa-like-1a (203 aa).

The signal sequence occupies residues 1–25; it reads MIMNGRWSFNTLAIIFILLSTAALS. Residues 26-97 are Extracellular-facing; the sequence is AHFRVCEPYS…SDSFAHNNYT (72 aa). Asparagine 53, asparagine 63, asparagine 72, asparagine 83, and asparagine 95 each carry an N-linked (GlcNAc...) asparagine glycan. A helical transmembrane segment spans residues 98–118; it reads ALIGVWIYGFFVMVLLALDFL. Topologically, residues 119–203 are cytoplasmic; the sequence is YYSAMNYELC…LLSFQTSTAW (85 aa). The segment at 157–191 is disordered; it reads ELNTGPGLSQQQQLHLHHHHHHHHPRHSLRGDTQS. Positions 161–170 are enriched in low complexity; the sequence is GPGLSQQQQL. Over residues 171 to 184 the composition is skewed to basic residues; that stretch reads HLHHHHHHHHPRHS.

Belongs to the shisa family.

It is found in the membrane. The chain is Protein shisa-like-1a (shisal1a) from Danio rerio (Zebrafish).